The sequence spans 124 residues: Small ribosomal subunit protein uS12 (124 aa).

Position 89 is a 3-methylthioaspartic acid (Asp89).

It belongs to the universal ribosomal protein uS12 family. As to quaternary structure, part of the 30S ribosomal subunit. Contacts proteins S8 and S17. May interact with IF1 in the 30S initiation complex.

Its function is as follows. With S4 and S5 plays an important role in translational accuracy. In terms of biological role, interacts with and stabilizes bases of the 16S rRNA that are involved in tRNA selection in the A site and with the mRNA backbone. Located at the interface of the 30S and 50S subunits, it traverses the body of the 30S subunit contacting proteins on the other side and probably holding the rRNA structure together. The combined cluster of proteins S8, S12 and S17 appears to hold together the shoulder and platform of the 30S subunit. The protein is Small ribosomal subunit protein uS12 of Erwinia tasmaniensis (strain DSM 17950 / CFBP 7177 / CIP 109463 / NCPPB 4357 / Et1/99).